The primary structure comprises 361 residues: 3-dehydroquinate synthase (361 aa).

It belongs to the archaeal-type DHQ synthase family.

It catalyses the reaction 2-amino-2,3,7-trideoxy-D-lyxo-hept-6-ulosonate + NAD(+) + H2O = 3-dehydroquinate + NH4(+) + NADH + H(+). Its function is as follows. Catalyzes the oxidative deamination and cyclization of 2-amino-3,7-dideoxy-D-threo-hept-6-ulosonic acid (ADH) to yield 3-dehydroquinate (DHQ), which is fed into the canonical shikimic pathway of aromatic amino acid biosynthesis. The chain is 3-dehydroquinate synthase (aroB') from Methanocaldococcus jannaschii (strain ATCC 43067 / DSM 2661 / JAL-1 / JCM 10045 / NBRC 100440) (Methanococcus jannaschii).